A 925-amino-acid chain; its full sequence is Protein PDC2 (925 aa).

Residues 63–138 (DANRLRKPNN…LSKMDVNISV (76 aa)) enclose the HTH CENPB-type domain. Disordered regions lie at residues 510–596 (DNNQ…RNSS), 674–693 (NEKA…SSTA), and 904–925 (PTGG…TGFF). Over residues 513–537 (QNHLSMSQASHNPDYNSNHSNNAIE) the composition is skewed to polar residues. The segment covering 538 to 563 (NTNNRGSNNNNNNNGSSNNINDNDSS) has biased composition (low complexity). Residues 565–596 (KYLQQNTVDNSTKTGNPGQPNISSMESQRNSS) are compositionally biased toward polar residues. The segment covering 674–686 (NEKAASDQNKSTD) has biased composition (basic and acidic residues). The segment covering 904 to 916 (PTGGSNLPDSNNL) has biased composition (polar residues).

Essential for the synthesis of pyruvate decarboxylase. May be important for a high basal level of PDC gene expression or play a positive role in the autoregulation control of PDC1 and PDC5. In Saccharomyces cerevisiae (strain ATCC 204508 / S288c) (Baker's yeast), this protein is Protein PDC2 (PDC2).